The following is a 194-amino-acid chain: MMEPFRIHKGTAAVLMNDNIDTDQIIPKQYLKRIERTGFGKFLFDEWRYDNNRQENPNFPLNAQERKGASILITGDNFGCGSSREHAPWALADYGFRVIIAGGFADIFYMNCMKNGMLPIVMDKDMREQLAKTDAREQITVDLENEIMTTNTHRFHFTIEKMWKEKLLNGLDEISITMQYEQEIKEYERKVALH.

It belongs to the LeuD family. LeuD type 1 subfamily. Heterodimer of LeuC and LeuD.

It carries out the reaction (2R,3S)-3-isopropylmalate = (2S)-2-isopropylmalate. Its pathway is amino-acid biosynthesis; L-leucine biosynthesis; L-leucine from 3-methyl-2-oxobutanoate: step 2/4. Catalyzes the isomerization between 2-isopropylmalate and 3-isopropylmalate, via the formation of 2-isopropylmaleate. This Bacillus cereus (strain ATCC 14579 / DSM 31 / CCUG 7414 / JCM 2152 / NBRC 15305 / NCIMB 9373 / NCTC 2599 / NRRL B-3711) protein is 3-isopropylmalate dehydratase small subunit.